The following is a 54-amino-acid chain: uncharacterized protein (54 aa).

The segment covering 1–28 (MDRKKDEIQRKYREQMREKKEREKEDGS) has biased composition (basic and acidic residues). Residues 1 to 29 (MDRKKDEIQRKYREQMREKKEREKEDGSS) are disordered. A helical transmembrane segment spans residues 31 to 51 (TFEIVVVLAIIILMFFFNSVF).

It localises to the cell membrane. This is an uncharacterized protein from Bacillus subtilis (strain 168).